A 713-amino-acid chain; its full sequence is Forkhead box protein P2 (713 aa).

Polar residues predominate over residues 1-28 (MMQESATETISNSSMNQNGMSTLSSQLD). Disordered stretches follow at residues 1–45 (MMQE…SEVS) and 279–337 (DNGI…TGAS). A compositionally biased stretch (low complexity) spans 290–303 (TTNNSSSTTSSTTS). Polar residues predominate over residues 313-322 (SIVNGQSSVL). The span at 324–335 (ARRDSSSHEETG) shows a compositional bias: basic and acidic residues. The C2H2-type zinc-finger motif lies at 344-369 (GVCKWPGCESICEDFGQFLKHLNNEH). Residues 386-407 (VQQLEIQLSKERERLQAMMTHL) form a leucine-zipper region. The segment at 420–424 (PLNLV) is CTBP1-binding. Residues 436-457 (TSPQSLPQTPTTPTAPVTPITQ) are compositionally biased toward low complexity. A disordered region spans residues 436 to 463 (TSPQSLPQTPTTPTAPVTPITQGPSVIT). A DNA-binding region (fork-head) is located at residues 502–592 (RPPFTYATLI…SQKITGSPTL (91 aa)). Disordered stretches follow at residues 647–666 (LDHIDSNGNSSPGCSPQPHI) and 676–713 (VIAEDEDCPMSLVTTANHSPELEDDREIEEEPLSEDLE). The span at 697 to 713 (LEDDREIEEEPLSEDLE) shows a compositional bias: acidic residues.

As to quaternary structure, forms homodimers and heterodimers with FOXP1 and FOXP4. Dimerization is required for DNA-binding. Interacts with CTBP1. Interacts with FOXP1. Interacts with TBR1. Interacts with ZMYM2.

It localises to the nucleus. In terms of biological role, transcriptional repressor that may play a role in the specification and differentiation of lung epithelium. May also play a role in developing neural, gastrointestinal and cardiovascular tissues. Can act with CTBP1 to synergistically repress transcription but CTPBP1 is not essential. Plays a role in synapse formation by regulating SRPX2 levels. The polypeptide is Forkhead box protein P2 (FOXP2) (Hylobates lar (Lar gibbon)).